The following is a 352-amino-acid chain: B1 bradykinin receptor (352 aa).

Residues 1–41 (MASWPPLELQSSNQSQLFPQNATACDNAPEAWDLLHRVLPT) are Extracellular-facing. N-linked (GlcNAc...) asparagine glycosylation is found at Asn-13 and Asn-21. The chain crosses the membrane as a helical span at residues 42–62 (FIISICSFGLLGNLFVLLVFL). Residues 63 to 72 (LPRRRLNVAE) lie on the Cytoplasmic side of the membrane. The chain crosses the membrane as a helical span at residues 73-93 (IYLANLAASDLVFVLGLPFWA). The Extracellular portion of the chain corresponds to 94–110 (ENIWNQFNWPFGALLCR). A disulfide bridge connects residues Cys-109 and Cys-188. A helical transmembrane segment spans residues 111 to 131 (VINGIIKANLFISIFLVVAIS). Over 132-153 (QDRYCVLVHPMASRRRQRRRQA) the chain is Cytoplasmic. A helical membrane pass occupies residues 154–174 (RVTCVLIWVVGGLLSIPTFLL). The Extracellular segment spans residues 175–206 (RSIQAVPDLNITACILLLPHEAWHFARIVELN). N-linked (GlcNAc...) asparagine glycosylation occurs at Asn-184. A helical transmembrane segment spans residues 207–227 (ILAFLLPLAAIIFFNYHILAS). Topologically, residues 228–250 (LRGREEVSRTRCGGSKDSKTTAL) are cytoplasmic. The chain crosses the membrane as a helical span at residues 251–271 (ILTLVVAFLVCWAPYHFFAFL). Residues 272-294 (EFLFQVQAVRGCFWEDFIDLGLQ) are Extracellular-facing. The helical transmembrane segment at 295-315 (LANFLAFTNSSLNPVIYVFVG) threads the bilayer. The Cytoplasmic segment spans residues 316–352 (RLFRTKVWELYKQCTPKSLAPISSSHRKEIFQLFWRN). The S-palmitoyl cysteine moiety is linked to residue Cys-329.

It belongs to the G-protein coupled receptor 1 family. Bradykinin receptor subfamily. BDKRB1 sub-subfamily.

The protein localises to the cell membrane. This is a receptor for bradykinin. Could be a factor in chronic pain and inflammation. In Macaca mulatta (Rhesus macaque), this protein is B1 bradykinin receptor (BDKRB1).